The sequence spans 144 residues: Large ribosomal subunit protein uL16 (144 aa).

This sequence belongs to the universal ribosomal protein uL16 family. As to quaternary structure, part of the 50S ribosomal subunit.

In terms of biological role, binds 23S rRNA and is also seen to make contacts with the A and possibly P site tRNAs. The polypeptide is Large ribosomal subunit protein uL16 (Porphyromonas gingivalis (strain ATCC 33277 / DSM 20709 / CIP 103683 / JCM 12257 / NCTC 11834 / 2561)).